The chain runs to 420 residues: UDP-N-acetylglucosamine 1-carboxyvinyltransferase (420 aa).

23–24 provides a ligand contact to phosphoenolpyruvate; the sequence is KN. Residue Arg92 participates in UDP-N-acetyl-alpha-D-glucosamine binding. The active-site Proton donor is the Cys116. A 2-(S-cysteinyl)pyruvic acid O-phosphothioketal modification is found at Cys116. Residues 121-125, 161-164, Asp306, and Ile328 contribute to the UDP-N-acetyl-alpha-D-glucosamine site; these read RPVDL and KVSV.

The protein belongs to the EPSP synthase family. MurA subfamily.

It is found in the cytoplasm. It carries out the reaction phosphoenolpyruvate + UDP-N-acetyl-alpha-D-glucosamine = UDP-N-acetyl-3-O-(1-carboxyvinyl)-alpha-D-glucosamine + phosphate. Its pathway is cell wall biogenesis; peptidoglycan biosynthesis. In terms of biological role, cell wall formation. Adds enolpyruvyl to UDP-N-acetylglucosamine. The polypeptide is UDP-N-acetylglucosamine 1-carboxyvinyltransferase (Photobacterium profundum (strain SS9)).